The following is a 387-amino-acid chain: Anhydro-N-acetylmuramic acid kinase (387 aa).

17–24 lines the ATP pocket; that stretch reads GTSMDGVD.

It belongs to the anhydro-N-acetylmuramic acid kinase family.

It carries out the reaction 1,6-anhydro-N-acetyl-beta-muramate + ATP + H2O = N-acetyl-D-muramate 6-phosphate + ADP + H(+). The protein operates within amino-sugar metabolism; 1,6-anhydro-N-acetylmuramate degradation. It functions in the pathway cell wall biogenesis; peptidoglycan recycling. In terms of biological role, catalyzes the specific phosphorylation of 1,6-anhydro-N-acetylmuramic acid (anhMurNAc) with the simultaneous cleavage of the 1,6-anhydro ring, generating MurNAc-6-P. Is required for the utilization of anhMurNAc either imported from the medium or derived from its own cell wall murein, and thus plays a role in cell wall recycling. This chain is Anhydro-N-acetylmuramic acid kinase, found in Burkholderia mallei (strain ATCC 23344).